The following is a 238-amino-acid chain: Pyridoxine 5'-phosphate synthase (238 aa).

Asn-7 contributes to the 3-amino-2-oxopropyl phosphate binding site. 1-deoxy-D-xylulose 5-phosphate is bound at residue 9–10; it reads DH. Arg-18 is a 3-amino-2-oxopropyl phosphate binding site. His-43 acts as the Proton acceptor in catalysis. Arg-45 and His-50 together coordinate 1-deoxy-D-xylulose 5-phosphate. The active-site Proton acceptor is the Glu-70. Thr-100 provides a ligand contact to 1-deoxy-D-xylulose 5-phosphate. The Proton donor role is filled by His-190. 3-amino-2-oxopropyl phosphate is bound by residues Gly-191 and 212-213; that span reads GH.

This sequence belongs to the PNP synthase family. Homooctamer; tetramer of dimers.

The protein localises to the cytoplasm. The catalysed reaction is 3-amino-2-oxopropyl phosphate + 1-deoxy-D-xylulose 5-phosphate = pyridoxine 5'-phosphate + phosphate + 2 H2O + H(+). The protein operates within cofactor biosynthesis; pyridoxine 5'-phosphate biosynthesis; pyridoxine 5'-phosphate from D-erythrose 4-phosphate: step 5/5. Catalyzes the complicated ring closure reaction between the two acyclic compounds 1-deoxy-D-xylulose-5-phosphate (DXP) and 3-amino-2-oxopropyl phosphate (1-amino-acetone-3-phosphate or AAP) to form pyridoxine 5'-phosphate (PNP) and inorganic phosphate. This Prochlorococcus marinus (strain AS9601) protein is Pyridoxine 5'-phosphate synthase.